We begin with the raw amino-acid sequence, 402 residues long: FMN-dependent alpha-hydroxy acid dehydrogenase qulF (402 aa).

Positions R22 to Y394 constitute an FMN hydroxy acid dehydrogenase domain. Position 48 (Y48) interacts with a 2-oxocarboxylate. FMN-binding residues include S130 and Q152. A 2-oxocarboxylate-binding residues include Y154 and R189. K265 is a binding site for FMN. H289 acts as the Proton acceptor in catalysis. Residue R292 coordinates a 2-oxocarboxylate. FMN-binding positions include D320 to R324 and G343 to R344.

This sequence belongs to the FMN-dependent alpha-hydroxy acid dehydrogenase family. The cofactor is FMN.

In terms of biological role, FMN-dependent alpha-hydroxy acid dehydrogenase; part of the gene cluster that mediates the biosynthesis of quinolactacin A2 (QUL A2), a fungal alkaloid that features a quinolone-gamma-lactam hybrid, which is a potential pharmacophore for the treatment of cancer and Alzheimer's disease. The quinolone-gamma-lactam hybrid scaffold is synthesized from the combination of L-isoleucine (L-Ile) and the nonproteinogenic amino acid L-kynurenine, followed by quinolone cyclization, oxidative decarboxylation, and lactam formation. Additionally, the N-methyl group is derived from methionine, which might be catalyzed by an S-adenosylmethionine (SAM)-dependent methyltransferase. Bioconversion of L-tryptophan to L-kynurenine could be catalyzed by the indoleamine-2,3-dioxygenase (IDO) qulI to produce an unstable product, N-formyl-L-kynurenine, followed by kynurenine formamidase catalyzed hydrolysis. QulM then acts as a methyltransferase that methylates L-kynurenine at the N-4 position. The FMN-dependent alpha-hydroxy acid dehydrogenase qulF than functions as an oxidative decarboxylase which converts N-methylkynurenine into 2-aminobenzoylacetamide via 2 tandem reactions, including dehydrogenation and decarboxylation. An amidase located outside of the qul gene cluster further produces the unstable beta-keto acid precursor N-methyl-2-aminobenzoylacetate, which could be spontaneously dehydrated to form N-methyl-4-hydroxy-2-quinolone. The NRPS qulB is able to incorporate N-methyl-2-aminobenzoylacetate and efficiently compete with the spontaneous reaction. By further extending the beta-keto acid with L-Ile, qulA performs a Dieckmann condensation to form the gamma-lactam ring and release a 4-ketopyrrolidinone intermediate from the assembly line. This intermediate could plausibly further undergo a spontaneous cyclization to yield the final quinolone-gamma-lactam hybrid structure. In Penicillium citrinum, this protein is FMN-dependent alpha-hydroxy acid dehydrogenase qulF.